An 866-amino-acid polypeptide reads, in one-letter code: Coiled-coil domain-containing protein 178 (866 aa).

Residues Met-1–Gly-21 are disordered. Coiled-coil stretches lie at residues Glu-157 to Ala-266, Glu-292 to Cys-403, Lys-439 to Val-480, Lys-514 to Leu-539, Arg-570 to Lys-631, and Glu-665 to Val-705.

This chain is Coiled-coil domain-containing protein 178 (Ccdc178), found in Mus musculus (Mouse).